A 426-amino-acid chain; its full sequence is UPF0329 protein ECU06_0040 (426 aa).

Residues 136–172 (RQRKREEETERSVKELVGDEEKAKSKEEKAKSKEEKA) show a composition bias toward basic and acidic residues. The segment at 136-230 (RQRKREEETE…GGKKKSKGGR (95 aa)) is disordered. The span at 220-230 (KGGKKKSKGGR) shows a compositional bias: basic residues.

This sequence belongs to the UPF0329 family.

This is UPF0329 protein ECU06_0040 from Encephalitozoon cuniculi (strain GB-M1) (Microsporidian parasite).